We begin with the raw amino-acid sequence, 148 residues long: Hemoglobin subunit gamma (148 aa).

A Globin domain is found at 3 to 148 (HFTAEEKAII…VAIAMGHKYH (146 aa)). Positions 64 and 93 each coordinate heme b.

This sequence belongs to the globin family. In terms of assembly, heterotetramer of two alpha chains and two gamma chains in fetal hemoglobin (Hb F). Red blood cells.

Functionally, gamma chains make up the fetal hemoglobin F, in combination with alpha chains. This chain is Hemoglobin subunit gamma (HBG), found in Carlito syrichta (Philippine tarsier).